Consider the following 352-residue polypeptide: Zinc finger protein 185 (352 aa).

Disordered stretches follow at residues 1–73 (MTTE…ELQS) and 86–121 (DVLP…ITPP). A Phosphoserine modification is found at Ser-18. The segment covering 61–72 (KKTTSSPTQELQ) has biased composition (polar residues). Thr-137 is subject to Phosphothreonine. Over residues 251-268 (VSSGKPVSSHCDSPSSIE) the composition is skewed to polar residues. A disordered region spans residues 251 to 287 (VSSGKPVSSHCDSPSSIEDSLDLAKKPPHEGTPSERP). A compositionally biased stretch (basic and acidic residues) spans 272 to 287 (DLAKKPPHEGTPSERP). The LIM zinc-binding domain maps to 292–347 (CTYCSHEIQDCPKITLEHLGICCHEYCFKCGICNKPMGDLLDQIFIHRDTIHCGKC).

As to expression, expressed in skin, kidney, ovary, testis. Also expressed in brain, cartilage, heart, lung, spleen and thymus.

Its subcellular location is the cytoplasm. The protein localises to the cytoskeleton. The protein resides in the cell junction. It localises to the focal adhesion. In terms of biological role, may be involved in the regulation of cellular proliferation and/or differentiation. This chain is Zinc finger protein 185 (Znf185), found in Mus musculus (Mouse).